A 309-amino-acid polypeptide reads, in one-letter code: MPKVRTKDLIEQFQLELISGEEGIHRPIDTSDLSRPGIEMAGFFTYYPADRVQLLGKTELTFFDTLTSEQKQERMKALCTEETPCIIVTRNQDVPDELLQASRESGMPLLRSSQTTTRLSSRLTNYLEGKLAPTTAVHGVLVDIYGVGVLITGQSGVGKSETALELVKRGHRLVADDSVEIRQEDEDMLVGSSPDLIEHLLEIRGLGIINVMTLFGAGAVRNYKRITLVINLEIWDQKKNYDRLGLDEEKMKIIDTELTKITLPVRPGRNLAVIIEVAAMNFRLKRMGVNAAQQFSERLMSAIELGNQE.

Active-site residues include His138 and Lys159. ATP is bound at residue 153–160 (GQSGVGKS). Ser160 is a Mg(2+) binding site. Catalysis depends on Asp177, which acts as the Proton acceptor; for phosphorylation activity. Proton donor; for dephosphorylation activity. Positions 201 to 210 (LEIRGLGIIN) are important for the catalytic mechanism of both phosphorylation and dephosphorylation. Glu202 is a binding site for Mg(2+). Residue Arg243 is part of the active site. Positions 264–269 (PVRPGR) are important for the catalytic mechanism of dephosphorylation.

The protein belongs to the HPrK/P family. As to quaternary structure, homohexamer. It depends on Mg(2+) as a cofactor.

The enzyme catalyses [HPr protein]-L-serine + ATP = [HPr protein]-O-phospho-L-serine + ADP + H(+). The catalysed reaction is [HPr protein]-O-phospho-L-serine + phosphate + H(+) = [HPr protein]-L-serine + diphosphate. In terms of biological role, catalyzes the ATP- as well as the pyrophosphate-dependent phosphorylation of a specific serine residue in HPr, a phosphocarrier protein of the phosphoenolpyruvate-dependent sugar phosphotransferase system (PTS). HprK/P also catalyzes the pyrophosphate-producing, inorganic phosphate-dependent dephosphorylation (phosphorolysis) of seryl-phosphorylated HPr (P-Ser-HPr). The two antagonistic activities of HprK/P are regulated by several intracellular metabolites, which change their concentration in response to the absence or presence of rapidly metabolisable carbon sources (glucose, fructose, etc.) in the growth medium. Also phosphorylates/dephosphorylates the HPr-like catabolite repression protein crh on a specific serine residue. Therefore, by controlling the phosphorylation state of HPr and crh, HPrK/P is a sensor enzyme that plays a major role in the regulation of carbon metabolism and sugar transport: it mediates carbon catabolite repression (CCR), and regulates PTS-catalyzed carbohydrate uptake and inducer exclusion. This chain is HPr kinase/phosphorylase, found in Bacillus cereus (strain B4264).